A 733-amino-acid polypeptide reads, in one-letter code: Phosphoribosylformylglycinamidine synthase subunit PurL (733 aa).

Residue H42 is part of the active site. Residues Y45 and K84 each coordinate ATP. A Mg(2+)-binding site is contributed by E86. Residues 87–90 (SHNH) and R109 each bind substrate. H88 acts as the Proton acceptor in catalysis. D110 is a binding site for Mg(2+). Q233 is a binding site for substrate. D261 serves as a coordination point for Mg(2+). 305-307 (ESQ) is a substrate binding site. Residues D489 and G526 each contribute to the ATP site. Residue N527 participates in Mg(2+) binding. S529 lines the substrate pocket.

This sequence belongs to the FGAMS family. Monomer. Part of the FGAM synthase complex composed of 1 PurL, 1 PurQ and 2 PurS subunits.

Its subcellular location is the cytoplasm. The enzyme catalyses N(2)-formyl-N(1)-(5-phospho-beta-D-ribosyl)glycinamide + L-glutamine + ATP + H2O = 2-formamido-N(1)-(5-O-phospho-beta-D-ribosyl)acetamidine + L-glutamate + ADP + phosphate + H(+). It functions in the pathway purine metabolism; IMP biosynthesis via de novo pathway; 5-amino-1-(5-phospho-D-ribosyl)imidazole from N(2)-formyl-N(1)-(5-phospho-D-ribosyl)glycinamide: step 1/2. Functionally, part of the phosphoribosylformylglycinamidine synthase complex involved in the purines biosynthetic pathway. Catalyzes the ATP-dependent conversion of formylglycinamide ribonucleotide (FGAR) and glutamine to yield formylglycinamidine ribonucleotide (FGAM) and glutamate. The FGAM synthase complex is composed of three subunits. PurQ produces an ammonia molecule by converting glutamine to glutamate. PurL transfers the ammonia molecule to FGAR to form FGAM in an ATP-dependent manner. PurS interacts with PurQ and PurL and is thought to assist in the transfer of the ammonia molecule from PurQ to PurL. This chain is Phosphoribosylformylglycinamidine synthase subunit PurL, found in Moorella thermoacetica (strain ATCC 39073 / JCM 9320).